A 155-amino-acid chain; its full sequence is MRRRRAERRQIPPDPVYGDVLVAKLINKVMWDGKKTIAQKIVYGAFDIIKEKMKKDPLEVFRQAVENVKPVLEVRPRRVGGATYQVPIEVQEPRRTSLAIRWIVEAARAKKGRPMKEKLAEEIMAAYNNTGTAIKKKEDTHRMAEANRAFAHYRW.

This sequence belongs to the universal ribosomal protein uS7 family. Part of the 30S ribosomal subunit. Contacts proteins S9 and S11.

Its function is as follows. One of the primary rRNA binding proteins, it binds directly to 16S rRNA where it nucleates assembly of the head domain of the 30S subunit. Is located at the subunit interface close to the decoding center, probably blocks exit of the E-site tRNA. In Thermotoga neapolitana (strain ATCC 49049 / DSM 4359 / NBRC 107923 / NS-E), this protein is Small ribosomal subunit protein uS7.